Reading from the N-terminus, the 189-residue chain is 3-hydroxyanthranilate 3,4-dioxygenase (189 aa).

Arg-50 contacts O2. Fe cation contacts are provided by His-54, Glu-60, and His-102. Glu-60 contributes to the substrate binding site. Positions 106 and 116 each coordinate substrate. A divalent metal cation contacts are provided by Cys-131, Cys-136, Cys-170, and Cys-173.

It belongs to the 3-HAO family. The cofactor is Fe(2+).

It is found in the cytoplasm. It catalyses the reaction 3-hydroxyanthranilate + O2 = (2Z,4Z)-2-amino-3-carboxymuconate 6-semialdehyde. The protein operates within cofactor biosynthesis; NAD(+) biosynthesis; quinolinate from L-kynurenine: step 3/3. In terms of biological role, catalyzes the oxidative ring opening of 3-hydroxyanthranilate to 2-amino-3-carboxymuconate semialdehyde, which spontaneously cyclizes to quinolinate. In Aspergillus niger (strain ATCC MYA-4892 / CBS 513.88 / FGSC A1513), this protein is 3-hydroxyanthranilate 3,4-dioxygenase (bna1).